The following is a 141-amino-acid chain: ATP synthase epsilon chain (141 aa).

It belongs to the ATPase epsilon chain family. F-type ATPases have 2 components, CF(1) - the catalytic core - and CF(0) - the membrane proton channel. CF(1) has five subunits: alpha(3), beta(3), gamma(1), delta(1), epsilon(1). CF(0) has three main subunits: a, b and c.

The protein resides in the cell inner membrane. Its function is as follows. Produces ATP from ADP in the presence of a proton gradient across the membrane. This chain is ATP synthase epsilon chain, found in Burkholderia multivorans (strain ATCC 17616 / 249).